A 70-amino-acid polypeptide reads, in one-letter code: KKNGYAVDSSGKAPECLLSNYCNNECTKVHYADKGYCCLLSCYCFGLSDDKKVLDISDTRKKYCDYTIIN.

Residues 2 to 65 (KNGYAVDSSG…ISDTRKKYCD (64 aa)) enclose the LCN-type CS-alpha/beta domain. 4 cysteine pairs are disulfide-bonded: Cys16/Cys37, Cys22/Cys42, Cys26/Cys44, and Cys38/Cys64.

In terms of tissue distribution, expressed by the venom gland.

Its subcellular location is the secreted. Functionally, excitatory insect beta-toxins induce a spastic paralysis. They bind voltage-independently at site-4 of sodium channels (Nav) and shift the voltage of activation toward more negative potentials thereby affecting sodium channel activation and promoting spontaneous and repetitive firing. In Isometrus vittatus (Bark scorpion), this protein is Toxin Isom2.